A 357-amino-acid chain; its full sequence is MAEPARALRVVRIYLDGAHGLGKTTTGRALAAASTAGEGVLFFPEPMAYWRTMFGTDALSGILAASARCAAASHGSARARRAGAPRRRGRGGPGCVLPGQVRGPVLNFARARVRAAAPPGPAPGGTVTLVFDRHPVAACLCYPFARYCLREINAEDLLMLAAAMPPEAPGANLVVCTLPPAEQQRRLAARARPGDRADAGFLVAVRNAYALLVNTCAFLRAGGDGATAGTRWSGRTQMHWPRSQTPVVMNAKCAGAGLRDTLFAALKCRELYPGGGTGLPAVHAWALDALAGRLAALEVFVLDVSAAPDACAAAVLDMRPAMQAACADGAAGATLATLARQFALEMAGEATAGPRGL.

17 to 24 (GAHGLGKT) is an ATP binding site. Catalysis depends on E45, which acts as the Proton acceptor. Residue R186 coordinates ATP. A substrate-binding site is contributed by R192.

Belongs to the herpesviridae thymidine kinase family. As to quaternary structure, homodimer.

The enzyme catalyses thymidine + ATP = dTMP + ADP + H(+). Functionally, catalyzes the transfer of the gamma-phospho group of ATP to thymidine to generate dTMP in the salvage pathway of pyrimidine synthesis. The dTMP serves as a substrate for DNA polymerase during viral DNA replication. Allows the virus to be reactivated and to grow in non-proliferative cells lacking a high concentration of phosphorylated nucleic acid precursors. The sequence is that of Thymidine kinase from Bovine herpesvirus 1 (strain 6660) (BoHV-1).